The following is a 478-amino-acid chain: Cytochrome c-552 (478 aa).

Positions 1–26 (MTRIKINARRIFSLLIPFFFFTSVHA) are cleaved as a signal peptide. His94 is a binding site for heme c. Heme-binding residues include Cys122, Cys125, and Lys126. Heme c contacts are provided by Cys160, Cys163, His164, Cys209, Cys212, and His213. Positions 215, 216, 261, and 263 each coordinate Ca(2+). A substrate-binding site is contributed by Tyr216. His264 is a binding site for substrate. 9 residues coordinate heme c: His275, Cys282, Cys285, His286, His301, Cys314, Cys317, His318, and His393.

It belongs to the cytochrome c-552 family. Ca(2+) serves as cofactor. The cofactor is heme c.

The protein localises to the periplasm. It carries out the reaction 6 Fe(III)-[cytochrome c] + NH4(+) + 2 H2O = 6 Fe(II)-[cytochrome c] + nitrite + 8 H(+). The protein operates within nitrogen metabolism; nitrate reduction (assimilation). Catalyzes the reduction of nitrite to ammonia, consuming six electrons in the process. This chain is Cytochrome c-552, found in Escherichia coli O6:H1 (strain CFT073 / ATCC 700928 / UPEC).